The primary structure comprises 495 residues: UDP-N-acetylmuramoyl-L-alanyl-D-glutamate--2,6-diaminopimelate ligase (495 aa).

UDP-N-acetyl-alpha-D-muramoyl-L-alanyl-D-glutamate-binding positions include Leu-27, Ser-29, and 44 to 46 (HQT). 116 to 122 (GTNGKTT) provides a ligand contact to ATP. UDP-N-acetyl-alpha-D-muramoyl-L-alanyl-D-glutamate-binding positions include Asn-157, 158-159 (TT), Ser-185, Gln-191, and Arg-193. Lys-225 carries the post-translational modification N6-carboxylysine. Meso-2,6-diaminopimelate-binding positions include Arg-390, 414 to 417 (DNPR), Gly-465, and Glu-469. The Meso-diaminopimelate recognition motif motif lies at 414–417 (DNPR).

The protein belongs to the MurCDEF family. MurE subfamily. Mg(2+) serves as cofactor. Post-translationally, carboxylation is probably crucial for Mg(2+) binding and, consequently, for the gamma-phosphate positioning of ATP.

It localises to the cytoplasm. It carries out the reaction UDP-N-acetyl-alpha-D-muramoyl-L-alanyl-D-glutamate + meso-2,6-diaminopimelate + ATP = UDP-N-acetyl-alpha-D-muramoyl-L-alanyl-gamma-D-glutamyl-meso-2,6-diaminopimelate + ADP + phosphate + H(+). Its pathway is cell wall biogenesis; peptidoglycan biosynthesis. Catalyzes the addition of meso-diaminopimelic acid to the nucleotide precursor UDP-N-acetylmuramoyl-L-alanyl-D-glutamate (UMAG) in the biosynthesis of bacterial cell-wall peptidoglycan. This Sodalis glossinidius (strain morsitans) protein is UDP-N-acetylmuramoyl-L-alanyl-D-glutamate--2,6-diaminopimelate ligase.